The chain runs to 298 residues: Lipoyl synthase 1 (298 aa).

Residues cysteine 34, cysteine 39, cysteine 45, cysteine 60, cysteine 64, cysteine 67, and serine 274 each contribute to the [4Fe-4S] cluster site. The region spanning 46 to 263 (FKAGTATFLI…RRAGEGMGFL (218 aa)) is the Radical SAM core domain. A disordered region spans residues 277 to 298 (AEQVQRLMRSHPRTPKNQHSPE).

The protein belongs to the radical SAM superfamily. Lipoyl synthase family. It depends on [4Fe-4S] cluster as a cofactor.

It is found in the cytoplasm. It carries out the reaction [[Fe-S] cluster scaffold protein carrying a second [4Fe-4S](2+) cluster] + N(6)-octanoyl-L-lysyl-[protein] + 2 oxidized [2Fe-2S]-[ferredoxin] + 2 S-adenosyl-L-methionine + 4 H(+) = [[Fe-S] cluster scaffold protein] + N(6)-[(R)-dihydrolipoyl]-L-lysyl-[protein] + 4 Fe(3+) + 2 hydrogen sulfide + 2 5'-deoxyadenosine + 2 L-methionine + 2 reduced [2Fe-2S]-[ferredoxin]. Its pathway is protein modification; protein lipoylation via endogenous pathway; protein N(6)-(lipoyl)lysine from octanoyl-[acyl-carrier-protein]: step 2/2. Functionally, catalyzes the radical-mediated insertion of two sulfur atoms into the C-6 and C-8 positions of the octanoyl moiety bound to the lipoyl domains of lipoate-dependent enzymes, thereby converting the octanoylated domains into lipoylated derivatives. This is Lipoyl synthase 1 from Gloeobacter violaceus (strain ATCC 29082 / PCC 7421).